The following is a 196-amino-acid chain: Imidazoleglycerol-phosphate dehydratase (196 aa).

The protein belongs to the imidazoleglycerol-phosphate dehydratase family.

Its subcellular location is the cytoplasm. It catalyses the reaction D-erythro-1-(imidazol-4-yl)glycerol 3-phosphate = 3-(imidazol-4-yl)-2-oxopropyl phosphate + H2O. The protein operates within amino-acid biosynthesis; L-histidine biosynthesis; L-histidine from 5-phospho-alpha-D-ribose 1-diphosphate: step 6/9. The polypeptide is Imidazoleglycerol-phosphate dehydratase (Ralstonia pickettii (strain 12J)).